Here is a 362-residue protein sequence, read N- to C-terminus: 3-dehydroquinate synthase (362 aa).

NAD(+) is bound by residues 71–76 (DGEKYK), 105–109 (GVIGD), 129–130 (TT), lysine 142, and lysine 151. Zn(2+) contacts are provided by glutamate 184, histidine 248, and histidine 265.

The protein belongs to the sugar phosphate cyclases superfamily. Dehydroquinate synthase family. It depends on Co(2+) as a cofactor. Requires Zn(2+) as cofactor. NAD(+) is required as a cofactor.

The protein resides in the cytoplasm. It carries out the reaction 7-phospho-2-dehydro-3-deoxy-D-arabino-heptonate = 3-dehydroquinate + phosphate. The protein operates within metabolic intermediate biosynthesis; chorismate biosynthesis; chorismate from D-erythrose 4-phosphate and phosphoenolpyruvate: step 2/7. Catalyzes the conversion of 3-deoxy-D-arabino-heptulosonate 7-phosphate (DAHP) to dehydroquinate (DHQ). The polypeptide is 3-dehydroquinate synthase (Hamiltonella defensa subsp. Acyrthosiphon pisum (strain 5AT)).